A 299-amino-acid chain; its full sequence is Recombination-associated protein RdgC (299 aa).

Belongs to the RdgC family.

Its subcellular location is the cytoplasm. The protein resides in the nucleoid. Its function is as follows. May be involved in recombination. In Cupriavidus pinatubonensis (strain JMP 134 / LMG 1197) (Cupriavidus necator (strain JMP 134)), this protein is Recombination-associated protein RdgC.